The following is a 265-amino-acid chain: Small ribosomal subunit protein uS2 (265 aa).

This sequence belongs to the universal ribosomal protein uS2 family.

In Microcystis aeruginosa (strain NIES-843 / IAM M-2473), this protein is Small ribosomal subunit protein uS2.